The sequence spans 358 residues: 3-dehydroquinate synthase (358 aa).

Residues 69–74 (DGEQYK), 103–107 (GVIGD), 127–128 (TT), lysine 140, lysine 149, and 167–170 (TLNT) each bind NAD(+). Zn(2+) is bound by residues glutamate 182, histidine 245, and histidine 262.

The protein belongs to the sugar phosphate cyclases superfamily. Dehydroquinate synthase family. Requires Co(2+) as cofactor. The cofactor is Zn(2+). NAD(+) is required as a cofactor.

The protein resides in the cytoplasm. It carries out the reaction 7-phospho-2-dehydro-3-deoxy-D-arabino-heptonate = 3-dehydroquinate + phosphate. Its pathway is metabolic intermediate biosynthesis; chorismate biosynthesis; chorismate from D-erythrose 4-phosphate and phosphoenolpyruvate: step 2/7. Functionally, catalyzes the conversion of 3-deoxy-D-arabino-heptulosonate 7-phosphate (DAHP) to dehydroquinate (DHQ). The sequence is that of 3-dehydroquinate synthase from Hydrogenovibrio crunogenus (strain DSM 25203 / XCL-2) (Thiomicrospira crunogena).